A 351-amino-acid chain; its full sequence is Major capsid protein (351 aa).

Belongs to the lambda phage major capsid protein family. Homomultimer.

It localises to the virion. The protein resides in the host cytoplasm. In terms of biological role, assembles to form an icosahedral capsid. The assembly is primed by the interaction between capsid assembly protease and portal dodecamer, and major capsid proteins assemble cooperatively to form the procapsid with the help of capsid scaffolding protein. Major capsid protein forms hexons and pentons of the icosahedron. Viral genomic DNA is packaged into the procapsid through the portal vertex. The packaging triggers a dramatic reconfiguration of the capsid shell. The protein is Major capsid protein of Pseudomonas phage KPP10 (Bacteriophage KPP10).